The following is a 136-amino-acid chain: Histone H3.2 (136 aa).

Positions 1 to 45 are disordered; it reads MARTKQTARKSTGGKAPRKQLATKAARKSAPATGGVKKPHRYRPG. An Asymmetric dimethylarginine; by PRMT6; alternate modification is found at arginine 3. Arginine 3 is modified (citrulline; alternate). At threonine 4 the chain carries Phosphothreonine; by HASPIN and VRK1. Lysine 5 is modified (allysine; alternate). Residue lysine 5 is modified to N6,N6,N6-trimethyllysine; alternate. Lysine 5 is subject to N6,N6-dimethyllysine; alternate. Residue lysine 5 is modified to N6-(2-hydroxyisobutyryl)lysine; alternate. Lysine 5 bears the N6-(beta-hydroxybutyryl)lysine; alternate mark. Lysine 5 bears the N6-acetyllysine; alternate mark. At lysine 5 the chain carries N6-crotonyllysine; alternate. Lysine 5 is subject to N6-methyllysine; alternate. A 5-glutamyl dopamine; alternate modification is found at glutamine 6. The residue at position 6 (glutamine 6) is a 5-glutamyl serotonin; alternate. Threonine 7 is modified (phosphothreonine; by PKC). Citrulline; alternate is present on arginine 9. The residue at position 9 (arginine 9) is a Symmetric dimethylarginine; by PRMT5; alternate. Lysine 10 carries the N6,N6,N6-trimethyllysine; alternate modification. Lysine 10 carries the post-translational modification N6,N6-dimethyllysine; alternate. An N6-(2-hydroxyisobutyryl)lysine; alternate modification is found at lysine 10. N6-(beta-hydroxybutyryl)lysine; alternate is present on lysine 10. Position 10 is an N6-acetyllysine; alternate (lysine 10). Lysine 10 is subject to N6-crotonyllysine; alternate. Position 10 is an N6-methyllysine; alternate (lysine 10). An N6-lactoyllysine; alternate modification is found at lysine 10. Serine 11 bears the ADP-ribosylserine; alternate mark. The residue at position 11 (serine 11) is a Phosphoserine; alternate; by AURKB, AURKC, RPS6KA3, RPS6KA4 and RPS6KA5. Threonine 12 is subject to Phosphothreonine; by PKC. Lysine 15 carries the N6-(2-hydroxyisobutyryl)lysine; alternate modification. Position 15 is an N6-(beta-hydroxybutyryl)lysine; alternate (lysine 15). Residue lysine 15 is modified to N6-acetyllysine; alternate. At lysine 15 the chain carries N6-lactoyllysine; alternate. Lysine 15 carries the N6-glutaryllysine; alternate modification. An N6-succinyllysine; alternate modification is found at lysine 15. Arginine 18 is subject to Citrulline; alternate. An Asymmetric dimethylarginine; by CARM1; alternate modification is found at arginine 18. N6-(2-hydroxyisobutyryl)lysine; alternate occurs at positions 19 and 24. N6-(beta-hydroxybutyryl)lysine; alternate is present on residues lysine 19 and lysine 24. Lysine 19 and lysine 24 each carry N6-acetyllysine; alternate. An N6-crotonyllysine; alternate mark is found at lysine 19 and lysine 24. An N6-methyllysine; alternate mark is found at lysine 19 and lysine 24. Lysine 19 and lysine 24 each carry N6-lactoyllysine; alternate. Lysine 19 and lysine 24 each carry N6-glutaryllysine; alternate. Residues lysine 19 and lysine 24 each carry the N6-butyryllysine; alternate modification. Lysine 19 is lipidated: N6-decanoyllysine. The residue at position 27 (arginine 27) is a Citrulline. Lysine 28 carries the N6,N6,N6-trimethyllysine; alternate modification. Position 28 is an N6,N6-dimethyllysine; alternate (lysine 28). Lysine 28 bears the N6-(2-hydroxyisobutyryl)lysine; alternate mark. Position 28 is an N6-acetyllysine; alternate (lysine 28). Lysine 28 bears the N6-crotonyllysine; alternate mark. Lysine 28 is subject to N6-methyllysine; alternate. Residue lysine 28 is modified to N6-lactoyllysine; alternate. At lysine 28 the chain carries N6-glutaryllysine; alternate. Serine 29 carries the ADP-ribosylserine; alternate modification. At serine 29 the chain carries Phosphoserine; alternate; by AURKB, AURKC and RPS6KA5. Lysine 37 bears the N6,N6,N6-trimethyllysine; alternate mark. At lysine 37 the chain carries N6,N6-dimethyllysine; alternate. Position 37 is an N6-(2-hydroxyisobutyryl)lysine; alternate (lysine 37). Lysine 37 carries the post-translational modification N6-acetyllysine; alternate. Position 37 is an N6-methyllysine; alternate (lysine 37). Lysine 38 carries the post-translational modification N6-methyllysine. Position 42 is a phosphotyrosine (tyrosine 42). Lysine 57 carries the post-translational modification N6,N6,N6-trimethyllysine; alternate. Residue lysine 57 is modified to N6-(2-hydroxyisobutyryl)lysine; alternate. N6-(beta-hydroxybutyryl)lysine; alternate is present on lysine 57. Lysine 57 bears the N6-acetyllysine; alternate mark. N6-crotonyllysine; alternate is present on lysine 57. N6-lactoyllysine; alternate is present on lysine 57. Position 57 is an N6-glutaryllysine; alternate (lysine 57). Lysine 57 carries the post-translational modification N6-succinyllysine; alternate. At lysine 57 the chain carries N6-methyllysine; by EHMT2; alternate. The residue at position 58 (serine 58) is a Phosphoserine. Residues lysine 65 and lysine 80 each carry the N6-(2-hydroxyisobutyryl)lysine; alternate modification. N6-methyllysine; alternate occurs at positions 65 and 80. Lysine 80 bears the N6,N6,N6-trimethyllysine; alternate mark. Position 80 is an N6,N6-dimethyllysine; alternate (lysine 80). Residue lysine 80 is modified to N6-acetyllysine; alternate. Position 80 is an N6-lactoyllysine; alternate (lysine 80). An N6-glutaryllysine; alternate modification is found at lysine 80. An N6-succinyllysine; alternate modification is found at lysine 80. A Phosphothreonine modification is found at threonine 81. A Phosphoserine modification is found at serine 87. The residue at position 108 (threonine 108) is a Phosphothreonine. Cysteine 111 is lipidated: S-palmitoyl cysteine. An N6-acetyllysine; alternate mark is found at lysine 116 and lysine 123. An N6-glutaryllysine; alternate mark is found at lysine 116 and lysine 123. Lysine 123 carries the post-translational modification N6-(2-hydroxyisobutyryl)lysine; alternate. Lysine 123 carries the post-translational modification N6-methyllysine; alternate. Position 123 is an N6-succinyllysine; alternate (lysine 123).

The protein belongs to the histone H3 family. In terms of assembly, the nucleosome is a histone octamer containing two molecules each of H2A, H2B, H3 and H4 assembled in one H3-H4 heterotetramer and two H2A-H2B heterodimers. The octamer wraps approximately 147 bp of DNA. During nucleosome assembly the chaperone ASF1A interacts with the histone H3-H4 heterodimer (via C-terminus of H3); this interaction is direct. Interacts with DNAJC9, CHAF1A and CHAF1B. Interacts with NASP; NASP is a histone chaperone that stabilizes and maintains a soluble pool of Histone H3-H4 dimers. Post-translationally, acetylation is generally linked to gene activation. Acetylation on Lys-10 (H3K9ac) impairs methylation at Arg-9 (H3R8me2s). Acetylation on Lys-19 (H3K18ac) and Lys-24 (H3K24ac) favors methylation at Arg-18 (H3R17me). Acetylation at Lys-123 (H3K122ac) by EP300/p300 plays a central role in chromatin structure: localizes at the surface of the histone octamer and stimulates transcription, possibly by promoting nucleosome instability. In terms of processing, citrullination at Arg-9 (H3R8ci) and/or Arg-18 (H3R17ci) by PADI4 impairs methylation and represses transcription. Asymmetric dimethylation at Arg-18 (H3R17me2a) by CARM1 is linked to gene activation. Symmetric dimethylation at Arg-9 (H3R8me2s) by PRMT5 is linked to gene repression. Asymmetric dimethylation at Arg-3 (H3R2me2a) by PRMT6 is linked to gene repression and is mutually exclusive with H3 Lys-5 methylation (H3K4me2 and H3K4me3). H3R2me2a is present at the 3' of genes regardless of their transcription state and is enriched on inactive promoters, while it is absent on active promoters. Post-translationally, methylation at Lys-5 (H3K4me), Lys-37 (H3K36me) and Lys-80 (H3K79me) are linked to gene activation. Methylation at Lys-5 (H3K4me) facilitates subsequent acetylation of H3 and H4. Methylation at Lys-80 (H3K79me) is associated with DNA double-strand break (DSB) responses and is a specific target for TP53BP1. Methylation at Lys-10 (H3K9me) and Lys-28 (H3K27me) are linked to gene repression. Methylation at Lys-10 (H3K9me) is a specific target for HP1 proteins (CBX1, CBX3 and CBX5) and prevents subsequent phosphorylation at Ser-11 (H3S10ph) and acetylation of H3 and H4. Methylation at Lys-5 (H3K4me) and Lys-80 (H3K79me) require preliminary monoubiquitination of H2B at 'Lys-120'. Methylation at Lys-10 (H3K9me) and Lys-28 (H3K27me) are enriched in inactive X chromosome chromatin. Monomethylation at Lys-57 (H3K56me1) by EHMT2/G9A in G1 phase promotes interaction with PCNA and is required for DNA replication. In terms of processing, phosphorylated at Thr-4 (H3T3ph) by VRK1. Phosphorylated at Thr-4 (H3T3ph) by HASPIN during prophase and dephosphorylated during anaphase. Phosphorylation at Ser-11 (H3S10ph) by AURKB is crucial for chromosome condensation and cell-cycle progression during mitosis and meiosis. In addition phosphorylation at Ser-11 (H3S10ph) by RPS6KA4 and RPS6KA5 is important during interphase because it enables the transcription of genes following external stimulation, like mitogens, stress, growth factors or UV irradiation and result in the activation of genes, such as c-fos and c-jun. Phosphorylation at Ser-11 (H3S10ph), which is linked to gene activation, prevents methylation at Lys-10 (H3K9me) but facilitates acetylation of H3 and H4. Phosphorylation at Ser-11 (H3S10ph) by AURKB mediates the dissociation of HP1 proteins (CBX1, CBX3 and CBX5) from heterochromatin. Phosphorylation at Ser-11 (H3S10ph) is also an essential regulatory mechanism for neoplastic cell transformation. Phosphorylated at Ser-29 (H3S28ph) by MAP3K20 isoform 1, RPS6KA5 or AURKB during mitosis or upon ultraviolet B irradiation. Phosphorylation at Thr-7 (H3T6ph) by PRKCB is a specific tag for epigenetic transcriptional activation that prevents demethylation of Lys-5 (H3K4me) by LSD1/KDM1A. At centromeres, specifically phosphorylated at Thr-12 (H3T11ph) from prophase to early anaphase, by DAPK3 and PKN1. Phosphorylation at Thr-12 (H3T11ph) by PKN1 or isoform M2 of PKM (PKM2) is a specific tag for epigenetic transcriptional activation that promotes demethylation of Lys-10 (H3K9me) by KDM4C/JMJD2C. Phosphorylation at Tyr-42 (H3Y41ph) by JAK2 promotes exclusion of CBX5 (HP1 alpha) from chromatin. Monoubiquitinated by RAG1 in lymphoid cells, monoubiquitination is required for V(D)J recombination. Ubiquitinated by the CUL4-DDB-RBX1 complex in response to ultraviolet irradiation. This may weaken the interaction between histones and DNA and facilitate DNA accessibility to repair proteins. Post-translationally, lysine deamination at Lys-5 (H3K4all) to form allysine is mediated by LOXL2. Allysine formation by LOXL2 only takes place on H3K4me3 and results in gene repression. In terms of processing, crotonylation (Kcr) is specifically present in male germ cells and marks testis-specific genes in post-meiotic cells, including X-linked genes that escape sex chromosome inactivation in haploid cells. Crotonylation marks active promoters and enhancers and confers resistance to transcriptional repressors. It is also associated with post-meiotically activated genes on autosomes. Butyrylation of histones marks active promoters and competes with histone acetylation. It is present during late spermatogenesis. Post-translationally, succinylation at Lys-80 (H3K79succ) by KAT2A takes place with a maximum frequency around the transcription start sites of genes. It gives a specific tag for epigenetic transcription activation. Desuccinylation at Lys-123 (H3K122succ) by SIRT7 in response to DNA damage promotes chromatin condensation and double-strand breaks (DSBs) repair. In terms of processing, serine ADP-ribosylation by PARP1 or PARP2 constitutes the primary form of ADP-ribosylation of proteins in response to DNA damage. Serine ADP-ribosylation at Ser-11 (H3S10ADPr) promotes recruitment of CHD1L. H3S10ADPr is mutually exclusive with phosphorylation at Ser-11 (H3S10ph) and impairs acetylation at Lys-10 (H3K9ac). Serotonylated by TGM2 at Gln-6 (H3Q5ser) during serotonergic neuron differentiation. H3Q5ser is associated with trimethylation of Lys-5 (H3K4me3) and enhances general transcription factor IID (TFIID) complex-binding to H3K4me3, thereby facilitating transcription. Post-translationally, dopaminylated by TGM2 at Gln-6 (H3Q5dop) in ventral tegmental area (VTA) neurons. H3Q5dop mediates neurotransmission-independent role of nuclear dopamine by regulating relapse-related transcriptional plasticity in the reward system. In terms of processing, lactylated in macrophages by EP300/P300 by using lactoyl-CoA directly derived from endogenous or exogenous lactate, leading to stimulates gene transcription.

It localises to the nucleus. It is found in the chromosome. In terms of biological role, core component of nucleosome. Nucleosomes wrap and compact DNA into chromatin, limiting DNA accessibility to the cellular machineries which require DNA as a template. Histones thereby play a central role in transcription regulation, DNA repair, DNA replication and chromosomal stability. DNA accessibility is regulated via a complex set of post-translational modifications of histones, also called histone code, and nucleosome remodeling. This Cricetulus longicaudatus (Long-tailed dwarf hamster) protein is Histone H3.2.